Here is a 149-residue protein sequence, read N- to C-terminus: Putative pre-16S rRNA nuclease (149 aa).

This sequence belongs to the YqgF nuclease family.

The protein localises to the cytoplasm. Functionally, could be a nuclease involved in processing of the 5'-end of pre-16S rRNA. The sequence is that of Putative pre-16S rRNA nuclease from Burkholderia orbicola (strain MC0-3).